The following is a 949-amino-acid chain: MILSLLFSLGGPLGWGLLGAWAQASSTSLSDLQSSRTPGVWKAEAEDTGKDPVGRNWCPYPMSKLVTLLALCKTEKFLIHSQQPCPQGAPDCQKVKVMYRMAHKPVYQVKQKVLTSLAWRCCPGYTGPNCEHHDSMAIPEPADPGDSHQEPQDGPVSFKPGHLAAVINEVEVQQEQQEHLLGDLQNDVHRVADSLPGLWKALPGNLTAAVMEANQTGHEFPDRSLEQVLLPHVDTFLQVHFSPIWRSFNQSLHSLTQAIRNLSLDVEANRQAISRVQDSAVARADFQELGAKFEAKVQENTQRVGQLRQDVEDRLHAQHFTLHRSISELQADVDTKLKRLHKAQEAPGTNGSLVLATPGAGARPEPDSLQARLGQLQRNLSELHMTTARREEELQYTLEDMRATLTRHVDEIKELYSESDETFDQISKVERQVEELQVNHTALRELRVILMEKSLIMEENKEEVERQLLELNLTLQHLQGGHADLIKYVKDCNCQKLYLDLDVIREGQRDATRALEETQVSLDERRQLDGSSLQALQNAVDAVSLAVDAHKAEGERARAATSRLRSQVQALDDEVGALKAAAAEARHEVRQLHSAFAALLEDALRHEAVLAALFGEEVLEEMSEQTPGPLPLSYEQIRVALQDAASGLQEQALGWDELAARVTALEQASEPPRPAEHLEPSHDAGREEAATTALAGLARELQSLSNDVKNVGRCCEAEAGAGAASLNASLHGLHNALFATQRSLEQHQRLFHSLFGNFQGLMEANVSLDLGKLQTMLSRKGKKQQKDLEAPRKRDKKEAEPLVDIRVTGPVPGALGAALWEAGSPVAFYASFSEGTAALQTVKFNTTYINIGSSYFPEHGYFRAPERGVYLFAVSVEFGPGPGTGQLVFGGHHRTPVCTTGQGSGSTATVFAMAELQKGERVWFELTQGSITKRSLSGTAFGGFLMFKT.

Residues 1–22 (MILSLLFSLGGPLGWGLLGAWA) form the signal peptide. The EMI domain occupies 54–132 (GRNWCPYPMS…PGYTGPNCEH (79 aa)). 3 disulfides stabilise this stretch: C58/C122, C85/C92, and C121/C130. The O-linked (Fuc...) serine glycan is linked to S63. T67 carries an O-linked (Fuc) threonine glycan. O-linked (Fuc) threonine glycosylation occurs at T115. The segment at 133–157 (HDSMAIPEPADPGDSHQEPQDGPVS) is disordered. A coiled-coil region spans residues 167-187 (INEVEVQQEQQEHLLGDLQND). Residues N205, N214, N249, N261, N350, N379, N439, and N472 are each glycosylated (N-linked (GlcNAc...) asparagine). Coiled coils occupy residues 292-487 (KFEA…DLIK), 547-596 (VDAH…HSAF), and 688-711 (EAAT…VKNV). N-linked (GlcNAc...) asparagine glycans are attached at residues N727 and N765. The segment at 779–801 (RKGKKQQKDLEAPRKRDKKEAEP) is disordered. Over residues 784 to 800 (QQKDLEAPRKRDKKEAE) the composition is skewed to basic and acidic residues. The C1q domain maps to 821–949 (EAGSPVAFYA…AFGGFLMFKT (129 aa)). N845 carries an N-linked (GlcNAc...) asparagine glycan.

Heteromer of p110, p125, p140 and p200 subunits; disulfide-linked. Interacts with VEGFA. Interacts with CD93; this interaction promotes angiogenesis. Interacts with CD248. N- and O-glycosylated. In terms of processing, O-fucosylated within the EMI domain (at Ser-63, Thr-67 and Thr-115) by FUT10/POFUT3 and FUT11/POFUT4. Post-translationally, processed by matrix metalloproteinases (MMPs) including MMP9 and, to a lesser degree, by MMP2 upon angiogenic stimulation. Endothelium.

It is found in the secreted. The protein localises to the extracellular space. It localises to the extracellular matrix. In terms of biological role, extracellular matrix protein that plays significant roles in the vascular system and is required for the maintenance and stability of blood vessel. Affects several essential steps in angiogenesis including endothelial cell proliferation, migration, and tube formation. Positively regulates angiogenesis by acting as a ligand for CD93 receptor. The chain is Multimerin-2 (MMRN2) from Homo sapiens (Human).